A 155-amino-acid chain; its full sequence is Cyanate hydratase (155 aa).

Residues Arg-92, Glu-95, and Ser-118 contribute to the active site.

The protein belongs to the cyanase family.

The catalysed reaction is cyanate + hydrogencarbonate + 3 H(+) = NH4(+) + 2 CO2. Its function is as follows. Catalyzes the reaction of cyanate with bicarbonate to produce ammonia and carbon dioxide. In Mycobacterium avium (strain 104), this protein is Cyanate hydratase.